The sequence spans 251 residues: Thiamine thiazole synthase (251 aa).

NAD(+) contacts are provided by residues S34, 53–54 (EK), G61, V125, and 151–153 (HVD). Fe cation is bound by residues D153 and H168. M216 lines the NAD(+) pocket. A glycine-binding site is contributed by R226.

The protein belongs to the THI4 family. As to quaternary structure, homooctamer; tetramer of dimers. Fe(2+) is required as a cofactor.

The catalysed reaction is hydrogen sulfide + glycine + NAD(+) = ADP-5-ethyl-4-methylthiazole-2-carboxylate + nicotinamide + 3 H2O + H(+). The protein operates within cofactor biosynthesis; thiamine diphosphate biosynthesis. In terms of biological role, involved in the biosynthesis of the thiazole moiety of thiamine. Catalyzes the conversion of NAD and glycine to adenosine diphosphate 5-(2-hydroxyethyl)-4-methylthiazole-2-carboxylate (ADT), an adenylated thiazole intermediate, using free sulfide as a source of sulfur. The polypeptide is Thiamine thiazole synthase (Thermococcus kodakarensis (strain ATCC BAA-918 / JCM 12380 / KOD1) (Pyrococcus kodakaraensis (strain KOD1))).